The following is a 279-amino-acid chain: DegV domain-containing protein lmo1863 (279 aa).

The DegV domain maps to 4–278; the sequence is IKIITDSTAG…TGAFAFMYYT (275 aa). Residues Ser-62 and Ser-94 each contribute to the hexadecanoate site.

Functionally, may bind long-chain fatty acids, such as palmitate, and may play a role in lipid transport or fatty acid metabolism. This is DegV domain-containing protein lmo1863 from Listeria monocytogenes serovar 1/2a (strain ATCC BAA-679 / EGD-e).